Reading from the N-terminus, the 700-residue chain is Elongation factor G 2 (700 aa).

In terms of domain architecture, tr-type G spans 8-290 (ERYRNIGISA…AVLDFLPSPI (283 aa)). GTP contacts are provided by residues 17–24 (AHIDAGKT), 88–92 (DTPGH), and 142–145 (NKMD).

Belongs to the TRAFAC class translation factor GTPase superfamily. Classic translation factor GTPase family. EF-G/EF-2 subfamily.

The protein localises to the cytoplasm. In terms of biological role, catalyzes the GTP-dependent ribosomal translocation step during translation elongation. During this step, the ribosome changes from the pre-translocational (PRE) to the post-translocational (POST) state as the newly formed A-site-bound peptidyl-tRNA and P-site-bound deacylated tRNA move to the P and E sites, respectively. Catalyzes the coordinated movement of the two tRNA molecules, the mRNA and conformational changes in the ribosome. This Paraburkholderia xenovorans (strain LB400) protein is Elongation factor G 2.